Consider the following 126-residue polypeptide: UPF0102 protein gll3754 (126 aa).

It belongs to the UPF0102 family.

This is UPF0102 protein gll3754 from Gloeobacter violaceus (strain ATCC 29082 / PCC 7421).